We begin with the raw amino-acid sequence, 465 residues long: UDP-N-acetylmuramate--L-alanine ligase (465 aa).

118 to 124 (GTHGKTT) lines the ATP pocket.

It belongs to the MurCDEF family.

The protein resides in the cytoplasm. It carries out the reaction UDP-N-acetyl-alpha-D-muramate + L-alanine + ATP = UDP-N-acetyl-alpha-D-muramoyl-L-alanine + ADP + phosphate + H(+). It participates in cell wall biogenesis; peptidoglycan biosynthesis. In terms of biological role, cell wall formation. This Ruegeria pomeroyi (strain ATCC 700808 / DSM 15171 / DSS-3) (Silicibacter pomeroyi) protein is UDP-N-acetylmuramate--L-alanine ligase.